The sequence spans 629 residues: MQYHEQFDVIVVGGGHAGTEAATAAARMGLNTLLLTHNIDTLGHMSCNPAIGGIGKGHLVKEVDALGGIMARAIDLGGIQFRTLNSSKGPAVRATRAQADRLLYKAVVRQMLENYPNLKIFQQACDDLIMDGDRVAGVVTQSGIRISGKTVVLTVGTFLNGLIHIGMENYKGGRAGDPPSIALAQRLRELPLRIDRLKTGTPPRIDARSVDLSVMQAQYGDDPRPVFSFIGDASQHPRQVPCYVTHTNERTHEVIRNNLDRSPMYAGVIEGIGPRYCPSIEDKITRFADKTAHQIFVEPEGLTTHELYPNGISTSLPFDVQVQIVRSVRGFENAHITRPGYAIEYDFFDPRDLKANMESKCIPNLFFAGQINGTTGYEEAAAQGLLAGLNAGLRAQEKDAWHPRRDQAYIGVMMDDLSTLGTREPYRMFTSRAEYRLLLREDNADLRLTGIGRELGLVDDERWGKFNAKMEQVEQERQRMRSTWIHPQHPSLEAVNALVNTPLTREQSLEELLRRPEVTYDALMAIEGVGPALPDTAAADQVEIQIKYAGYIERQHDEVEKQLRNENTLLPLDMNYRDVNGLSNEVIAKLNDAKPQTIGQASRISGITPAAISILLVHLKKHGLLRKTA.

An FAD-binding site is contributed by 13–18 (GGGHAG). 273 to 287 (GPRYCPSIEDKITRF) contributes to the NAD(+) binding site.

Belongs to the MnmG family. Homodimer. Heterotetramer of two MnmE and two MnmG subunits. FAD serves as cofactor.

The protein resides in the cytoplasm. In terms of biological role, NAD-binding protein involved in the addition of a carboxymethylaminomethyl (cmnm) group at the wobble position (U34) of certain tRNAs, forming tRNA-cmnm(5)s(2)U34. In Aeromonas hydrophila subsp. hydrophila (strain ATCC 7966 / DSM 30187 / BCRC 13018 / CCUG 14551 / JCM 1027 / KCTC 2358 / NCIMB 9240 / NCTC 8049), this protein is tRNA uridine 5-carboxymethylaminomethyl modification enzyme MnmG.